A 159-amino-acid chain; its full sequence is Serine-protein kinase RsbW (159 aa).

It belongs to the anti-sigma-factor family.

The enzyme catalyses L-seryl-[protein] + ATP = O-phospho-L-seryl-[protein] + ADP + H(+). It carries out the reaction L-threonyl-[protein] + ATP = O-phospho-L-threonyl-[protein] + ADP + H(+). Its function is as follows. Negative regulator of sigma-B activity. Phosphorylates and inactivates its specific antagonist protein, RsbV. Upon phosphorylation of RsbV, RsbW is released and binds to sigma-B, thereby blocking its ability to form an RNA polymerase holoenzyme (E-sigma-B). The protein is Serine-protein kinase RsbW of Staphylococcus aureus (strain MRSA252).